Here is a 250-residue protein sequence, read N- to C-terminus: Acetylglutamate kinase (250 aa).

Substrate contacts are provided by residues 41 to 42 (GG), Arg63, and Asn156.

Belongs to the acetylglutamate kinase family. ArgB subfamily.

Its subcellular location is the cytoplasm. The enzyme catalyses N-acetyl-L-glutamate + ATP = N-acetyl-L-glutamyl 5-phosphate + ADP. It participates in amino-acid biosynthesis; L-arginine biosynthesis; N(2)-acetyl-L-ornithine from L-glutamate: step 2/4. In terms of biological role, catalyzes the ATP-dependent phosphorylation of N-acetyl-L-glutamate. The protein is Acetylglutamate kinase of Listeria monocytogenes serovar 1/2a (strain ATCC BAA-679 / EGD-e).